We begin with the raw amino-acid sequence, 177 residues long: MKMIVGLGNPGSKYAKTKHNIGFMVIDQLCEKYNVTLNKHDFEAEYGSFKYEGETVLLVKPLTFMNDSGRSVGPLMSYYQVGIDELLVIQDDMDLTMGKLRLRQKGSAGGHNGIKSIIAHTKSQTFKRLKIGIQHPQKSTVVNWVLTPFDKDGAPVINQAIDQACEESTTGVKMTTL.

Tyr-14 contributes to the tRNA binding site. Catalysis depends on His-19, which acts as the Proton acceptor. TRNA is bound by residues Phe-64, Asn-66, and Asn-112.

It belongs to the PTH family. In terms of assembly, monomer.

The protein localises to the cytoplasm. The catalysed reaction is an N-acyl-L-alpha-aminoacyl-tRNA + H2O = an N-acyl-L-amino acid + a tRNA + H(+). In terms of biological role, hydrolyzes ribosome-free peptidyl-tRNAs (with 1 or more amino acids incorporated), which drop off the ribosome during protein synthesis, or as a result of ribosome stalling. Functionally, catalyzes the release of premature peptidyl moieties from peptidyl-tRNA molecules trapped in stalled 50S ribosomal subunits, and thus maintains levels of free tRNAs and 50S ribosomes. The polypeptide is Peptidyl-tRNA hydrolase (Latilactobacillus sakei (Lactobacillus sakei)).